A 162-amino-acid chain; its full sequence is UPF0305 protein MmarC7_1691 (162 aa).

The protein belongs to the UPF0305 family.

The polypeptide is UPF0305 protein MmarC7_1691 (Methanococcus maripaludis (strain C7 / ATCC BAA-1331)).